The following is a 75-amino-acid chain: MLIPYDQLEPDTLTRLIEDFVTREGTDNGDETPLQTRVLRVRHALTKGQAVIFFDLESQQCQLMLKHDVPKEFFD.

Belongs to the UPF0270 family.

The sequence is that of UPF0270 protein PSPTO_1630 from Pseudomonas syringae pv. tomato (strain ATCC BAA-871 / DC3000).